Reading from the N-terminus, the 615-residue chain is Putative binding protein BruAb2_0648 (615 aa).

The signal sequence occupies residues 1–29 (MLNRFIAFFRSVFLIGLVATAFGALPARA).

Belongs to the bacterial solute-binding protein 5 family.

Its subcellular location is the periplasm. The polypeptide is Putative binding protein BruAb2_0648 (Brucella abortus biovar 1 (strain 9-941)).